A 238-amino-acid chain; its full sequence is DNA repair protein RecO (238 aa).

The protein belongs to the RecO family.

In terms of biological role, involved in DNA repair and RecF pathway recombination. This is DNA repair protein RecO from Aliivibrio fischeri (strain ATCC 700601 / ES114) (Vibrio fischeri).